A 262-amino-acid chain; its full sequence is Granzyme A (262 aa).

A signal peptide spans 1–26; that stretch reads MRNSYRFLASSLSVVVSLLLIPEDVC. A propeptide spans 27-28 (activation peptide); it reads EK. A Peptidase S1 domain is found at 29 to 259; sequence IIGGNEVTPH…HLNWIIMTIK (231 aa). A disulfide bridge links Cys54 with Cys70. Active-site charge relay system residues include His69 and Asp114. 3 disulfide bridges follow: Cys148/Cys218, Cys179/Cys197, and Cys208/Cys234. Asn170 is a glycosylation site (N-linked (GlcNAc...) asparagine). Ser212 functions as the Charge relay system in the catalytic mechanism.

It belongs to the peptidase S1 family. Granzyme subfamily. As to quaternary structure, homodimer; disulfide-linked. Interacts with APEX1.

It localises to the secreted. Its subcellular location is the cytoplasmic granule. It carries out the reaction Hydrolysis of proteins, including fibronectin, type IV collagen and nucleolin. Preferential cleavage: -Arg-|-Xaa-, -Lys-|-Xaa- &gt;&gt; -Phe-|-Xaa- in small molecule substrates.. In terms of biological role, abundant protease in the cytosolic granules of cytotoxic T-cells and NK-cells which activates caspase-independent pyroptosis when delivered into the target cell through the immunological synapse. It cleaves after Lys or Arg. Once delivered into the target cell, acts by catalyzing cleavage of gasdermin-B (GSDMB), releasing the pore-forming moiety of GSDMB, thereby triggering pyroptosis and target cell death. Cleaves APEX1 after 'Lys-31' and destroys its oxidative repair activity. Cleaves the nucleosome assembly protein SET after 'Lys-189', which disrupts its nucleosome assembly activity and allows the SET complex to translocate into the nucleus to nick and degrade the DNA. The protein is Granzyme A of Homo sapiens (Human).